Consider the following 210-residue polypeptide: T-cell surface glycoprotein CD8 beta chain (210 aa).

A signal peptide spans 1-21 (MRPRLWLLLAAQLAVLHGSSV). The Ig-like V-type domain occupies 22 to 132 (LQQTPAYIKV…ELTFGKGTQL (111 aa)). Residues 22–170 (LQQTPAYIKV…ETQKGPLCSP (149 aa)) are Extracellular-facing. A disulfide bridge connects residues Cys41 and Cys116. The N-linked (GlcNAc...) asparagine glycan is linked to Asn102. Residues 171–191 (ITLGLLVAGVLVLLVSLGVAI) traverse the membrane as a helical segment. The Cytoplasmic segment spans residues 192 to 210 (HLCCRRRRARLRFMKQFYK).

Forms disulfide-linked heterodimers with CD8A at the cell surface. Interacts with CD3D; this interaction couples TCR-CD3 with CD8. Interacts with LCK. In terms of processing, phosphorylated as a consequence of T-cell activation. Post-translationally, palmitoylated at the cytoplasmic tail and thereby targets the heterodimer CD8A/CD8B to lipid rafts unlike CD8A homodimers.

It is found in the cell membrane. Its function is as follows. Integral membrane glycoprotein that plays an essential role in the immune response and serves multiple functions in responses against both external and internal offenses. In T-cells, functions primarily as a coreceptor for MHC class I molecule:peptide complex. The antigens presented by class I peptides are derived from cytosolic proteins while class II derived from extracellular proteins. Interacts simultaneously with the T-cell receptor (TCR) and the MHC class I proteins presented by antigen presenting cells (APCs). In turn, recruits the Src kinase LCK to the vicinity of the TCR-CD3 complex. A palmitoylation site in the cytoplasmic tail of CD8B chain contributes to partitioning of CD8 into the plasma membrane lipid rafts where signaling proteins are enriched. Once LCK recruited, it initiates different intracellular signaling pathways by phosphorylating various substrates ultimately leading to lymphokine production, motility, adhesion and activation of cytotoxic T-lymphocytes (CTLs). Additionally, plays a critical role in thymic selection of CD8+ T-cells. This Pongo pygmaeus (Bornean orangutan) protein is T-cell surface glycoprotein CD8 beta chain (CD8B).